Consider the following 250-residue polypeptide: 5-oxoprolinase subunit A (250 aa).

Belongs to the LamB/PxpA family. Forms a complex composed of PxpA, PxpB and PxpC.

It catalyses the reaction 5-oxo-L-proline + ATP + 2 H2O = L-glutamate + ADP + phosphate + H(+). Functionally, catalyzes the cleavage of 5-oxoproline to form L-glutamate coupled to the hydrolysis of ATP to ADP and inorganic phosphate. This Thermus thermophilus (strain ATCC BAA-163 / DSM 7039 / HB27) protein is 5-oxoprolinase subunit A.